The following is a 930-amino-acid chain: Protein translocase subunit SecA (930 aa).

Residues Q87, 105 to 109 (GEGKT), and D516 each bind ATP. Residues C914, C916, C925, and H926 each coordinate Zn(2+).

The protein belongs to the SecA family. Monomer and homodimer. Part of the essential Sec protein translocation apparatus which comprises SecA, SecYEG and auxiliary proteins SecDF-YajC and YidC. It depends on Zn(2+) as a cofactor.

It localises to the cell inner membrane. The protein resides in the cytoplasm. The catalysed reaction is ATP + H2O + cellular proteinSide 1 = ADP + phosphate + cellular proteinSide 2.. In terms of biological role, part of the Sec protein translocase complex. Interacts with the SecYEG preprotein conducting channel. Has a central role in coupling the hydrolysis of ATP to the transfer of proteins into and across the cell membrane, serving both as a receptor for the preprotein-SecB complex and as an ATP-driven molecular motor driving the stepwise translocation of polypeptide chains across the membrane. This Variovorax paradoxus (strain S110) protein is Protein translocase subunit SecA.